The sequence spans 891 residues: MSQGSQVHIFLGAPVAPLKTTVSQGTASLMSTANAWEKVRLFYKQHSLYLKAGDQEFKNLEDCQVPKGLGPPGLLSGDVLTTSVRRSAQVDEDFKHSASEAQSVKSQVNLSDMTSGQMCGLGDGVQHLPEEEKDQKLQCKNKKITDEQSKNQSDPCVRNFQRDLFALDLKCAAKLDLGCCTEQMSTGTKPEPTGHRERQSQESFSDTRCEPQSEGAVRKASDQRLSAEAEFLSVLTSSQRAFLAQGNDKGQDCINKSTVNMEAEPTGSQGVRRTEGDFSKPGGDFEEESENEQSQVYSLELFSPVCPESESSHSHINPGKNLENTSSQELFSNEENLPPNELCSSHPSTANRSWSCKDDSHHSKALSEVHQVSKKPRMDSNIREAAKAVPQRVMSELKDSKKISLIKNCDSKNQKYNCLVMVLTPCHVKEITIKSGPNSGSKVPLATIVVIDQSEIKKRVVLWRTAAFGALTVFLGDIILLTDVVLYEDQWIGETVLQSTFTSQLLNLGSYSYVQPEKYSNVIANVILQDLLTYVSTKHSYLKDLPQRQPQKMNTVEFVELEQLQPDILVHAVLRVVDVTVLTEALYSYRGQKQRKVVLTVEQAQGQHYVLVLWGPGAAWYTQLQRKKDSIWEFKYLFVQRNSILENLELHTTLWSSCECLFDDDTRAISFKTKFQKNTSSFVKISDLATHLEDKYSGVVLIKAKVSELVFSAAAAQKIALNARSTLQSIFSSLPSIVYAGCAHCGSELETDENRIYRQCLSCLPFVGKKIFYRPALMTIVDGRYNTCVHVGSKMMEQILLNISPDCLNRVIVPSSEVTYGMVASDLLHSLLAVSAEPCVLKIQSLFELDENSYPLQQDFSLLDFCPDSRKLWSPGLSLRAEGTGGIPGKE.

Residues 1 to 61 (MSQGSQVHIF…AGDQEFKNLE (61 aa)) form a sufficient for interaction with SHLD3 and MAD2L2 region. Residues 1–542 (MSQGSQVHIF…TYVSTKHSYL (542 aa)) form an interaction with ASTE1 region. Disordered stretches follow at residues 184–222 (MSTG…KASD), 260–294 (NMEA…NEQS), and 333–357 (NEEN…WSCK). Residues 192–222 (PTGHRERQSQESFSDTRCEPQSEGAVRKASD) show a composition bias toward basic and acidic residues. Composition is skewed to polar residues over residues 260–271 (NMEAEPTGSQGV) and 342–354 (LCSS…NRSW). Positions 695-866 (KYSGVVLIKA…QQDFSLLDFC (172 aa)) are mediates interaction with SHLD1.

Belongs to the SHLD2 family. As to quaternary structure, component of the shieldin complex, consisting of SHLD1, SHLD2, SHLD3 and MAD2L2/REV7. Within the complex, SHLD2 forms a scaffold which interacts with a SHLD3-MAD2L2 subcomplex via its N-terminus, and with SHLD1 via its C-terminus. Interacts with TP53BP1. Interacts with RIF1. Interacts with ASTE1.

Its subcellular location is the chromosome. In terms of biological role, component of the shieldin complex, which plays an important role in repair of DNA double-stranded breaks (DSBs). During G1 and S phase of the cell cycle, the complex functions downstream of TP53BP1 to promote non-homologous end joining (NHEJ) and suppress DNA end resection. Mediates various NHEJ-dependent processes including immunoglobulin class-switch recombination, and fusion of unprotected telomeres. The polypeptide is Shieldin complex subunit 2 (Mus musculus (Mouse)).